Consider the following 71-residue polypeptide: Putative membrane protein insertion efficiency factor (71 aa).

The protein belongs to the UPF0161 family.

It localises to the cell membrane. In terms of biological role, could be involved in insertion of integral membrane proteins into the membrane. The polypeptide is Putative membrane protein insertion efficiency factor (Acetivibrio thermocellus (strain ATCC 27405 / DSM 1237 / JCM 9322 / NBRC 103400 / NCIMB 10682 / NRRL B-4536 / VPI 7372) (Clostridium thermocellum)).